The chain runs to 126 residues: Aspartate 1-decarboxylase (126 aa).

Ser25 functions as the Schiff-base intermediate with substrate; via pyruvic acid in the catalytic mechanism. Ser25 carries the pyruvic acid (Ser) modification. Substrate is bound at residue Thr57. The active-site Proton donor is the Tyr58. Residue 73-75 coordinates substrate; it reads GAA.

Belongs to the PanD family. As to quaternary structure, heterooctamer of four alpha and four beta subunits. Pyruvate is required as a cofactor. In terms of processing, is synthesized initially as an inactive proenzyme, which is activated by self-cleavage at a specific serine bond to produce a beta-subunit with a hydroxyl group at its C-terminus and an alpha-subunit with a pyruvoyl group at its N-terminus.

The protein resides in the cytoplasm. It carries out the reaction L-aspartate + H(+) = beta-alanine + CO2. It participates in cofactor biosynthesis; (R)-pantothenate biosynthesis; beta-alanine from L-aspartate: step 1/1. In terms of biological role, catalyzes the pyruvoyl-dependent decarboxylation of aspartate to produce beta-alanine. The protein is Aspartate 1-decarboxylase of Psychrobacter arcticus (strain DSM 17307 / VKM B-2377 / 273-4).